A 114-amino-acid chain; its full sequence is Hydrogenase maturation factor HypA (114 aa).

His2 is a binding site for Ni(2+). Zn(2+) is bound by residues Cys73, Cys76, Cys89, and Cys92.

Belongs to the HypA/HybF family.

Its function is as follows. Involved in the maturation of [NiFe] hydrogenases. Required for nickel insertion into the metal center of the hydrogenase. The protein is Hydrogenase maturation factor HypA of Psychromonas ingrahamii (strain DSM 17664 / CCUG 51855 / 37).